The primary structure comprises 447 residues: uncharacterized protein (447 aa).

3 disordered regions span residues Met1 to Ser80, Ala115 to Pro184, and Leu295 to Ile322. Positions Gln11–Ser32 are enriched in basic and acidic residues. Polar residues predominate over residues Lys42 to Ser51. Over residues Val61–Asp72 the composition is skewed to basic and acidic residues. Residues Ala115–Ser158 show a composition bias toward polar residues. A compositionally biased stretch (low complexity) spans Ser300–Gly321. The next 2 membrane-spanning stretches (helical) occupy residues Phe385–Leu405 and Ile424–Gly444.

It is found in the membrane. This is an uncharacterized protein from Schizosaccharomyces pombe (strain 972 / ATCC 24843) (Fission yeast).